The primary structure comprises 392 residues: MVLSNPAMLPPGFRFHPTDEELIVHYLRNRAASSPCPVSIIADVDIYKFDPWDLPSKENYGDREWYFFSPRDRKYPNGIRPNRAAGSGYWKATGTDKPIHSSGGAATNESVGVKKALVFYKGRPPKGTKTNWIMHEYRLAAADAHAANTYRPMKFRNTSMRLDDWVLCRIYKKSSHASPLAVPPLSDHEQDEPCALEENAPLYAPSSSSAASMILQGAAAGAFPSLHAAAAATQRTAMQKIPSISDLLNEYSLSQLFDDGGAAAAAPLQEMARQPDHHHHQQQQHALFGHPVMNHFIANNSMVQLAHLDPSSSAAASTSAGAVVEPPAVTGKRKRSSDGGEPTIQALPPAAAAAKKPNGSCVGATFQIGSALQGSSLGLSHQMLLHSNMGMN.

The 165-residue stretch at 9–173 (LPPGFRFHPT…DWVLCRIYKK (165 aa)) folds into the NAC domain. The disordered stretch occupies residues 317-345 (STSAGAVVEPPAVTGKRKRSSDGGEPTIQ).

In terms of tissue distribution, expressed in leaves, nodes, internodes and mature seeds. Highly expressed in roots. Expressed in leaf sheaths, flag leaves and inflorescences. Expressed in primary and lateral roots, particularly in the vascular tissues. Expressed in the primary phloem of the culm and leaf sheaths. Expressed principally in the primary phloem and in the peripheral zone of the leaf vascular bundles. Expressed in the floral tissues.

The protein localises to the nucleus. In terms of biological role, transcription factor that acts as a positive regulator of the jasmonate (JA) pathway to mediate leaf senescence. May directly regulate LOX2, AOC, AOS2, AOC1 and OPR7, which are genes involved in the biosynthesis of JA. Regulates positively leaf senescence by directly targeting senescence-associated genes (SAGs) related to chlorophyll degradation, nutrient transport and other genes associated with abscisic acid-induced leaf senescence. Transcription activator that plays a role in mediating abiotic stress responses through the abscisic acid (ABA) pathway. Possesses transcriptional activator activity in yeast. The protein is NAC domain-containing protein 58 of Oryza sativa subsp. japonica (Rice).